A 619-amino-acid polypeptide reads, in one-letter code: MLGGSSVDGERDTDDDAAGAVAAPPAIDFPAEVSDPKYDESDVPAELQVLKEPLQQPTFPFLVANQLLLVSLLEHLSHVHEPNPLHSKQVFKLLCQTFIKMGLLSSFTCSDEFSSLRLHHNRAITHLMRSAKERVRQDPCQDNSYMQKIRSREIAFEAQTSRYLNEFEELAILGKGGYGRVYKVRNKLDGQHYAIKKILIKSATKTDCMKVLREVKVLAGLQHPNIVGYHTAWIEHVHVVQPQDRVPIQLPSLEVLSEQEGDRDQGGVKDNESSSSIVFAELTPEKEKPFGESEVKNENNNLVSYTANLVVRNSSESESSIELQEDGLTDLSVRPVVRHQLPLGHSSELEGNFTSTDESSEGNLNLLGQTEVRYHLMLHIQMQLCELSLWDWITERNKRSREYVDEAACPYVMASVATKIFQELVEGVFYIHNMGIVHRDLKPRNIFLHGPDQQVKIGDFGLACADIIQNADWTNRNGKGTRTHTSRVGTCLYASPEQLEGSQYDAKSDMYSLGVILLELFQPFGTEMERATVLTGVRTGRIPESLSKRCPVQAKYIQLLTGRNVSQRPSALQLLQSELFQTTGNVNLTLQMKIIEQEKEIEELKKQLSLLSQDRGLKR.

The segment at 1 to 40 (MLGGSSVDGERDTDDDAAGAVAAPPAIDFPAEVSDPKYDE) is disordered. Residues 18-28 (AGAVAAPPAID) show a composition bias toward low complexity. The SIFI-degron motif lies at 85–104 (LHSKQVFKLLCQTFIKMGLL). A Protein kinase domain is found at 167 to 580 (FEELAILGKG…ALQLLQSELF (414 aa)). Residues 173–181 (LGKGGYGRV) and lysine 196 each bind ATP. Phosphothreonine is present on threonine 283. An HRM 1 repeat occupies 408–413 (ACPYVM). Aspartate 440 acts as the Proton acceptor in catalysis. Phosphothreonine; by autocatalysis occurs at positions 483, 485, and 490. An HRM 2 repeat occupies 549 to 554 (RCPVQA).

Belongs to the protein kinase superfamily. Ser/Thr protein kinase family. GCN2 subfamily. Synthesized in an inactive form that binds to the N-terminal domain of CDC37. Has to be associated with a multiprotein complex containing Hsp90, CDC37 and PPP5C for maturation and activation by autophosphorylation. The phosphatase PPP5C modulates this activation. Homodimer; homodimerizes in presence of heme, forming a disulfide-linked inactive homodimer. Interacts with DELE1; binds both to full-length DELE1 and processed form of DELE1 (S-DELE1) in response to stress, leading to activate its protein kinase activity and trigger the integrated stress response (ISR). Activated by autophosphorylation; phosphorylated predominantly on serine and threonine residues, but also on tyrosine residues. Autophosphorylation at Thr-485 is required for kinase activation. The active autophosphorylated form apparently is largely refractory to cellular heme fluctuations. Post-translationally, ubiquitinated and degraded by the SIFI complex once the mitochondrial stress has been resolved, thereby providing stress response silencing. Within the SIFI complex, UBR4 initiates ubiquitin chain that are further elongated or branched by KCMF1. In terms of tissue distribution, expressed predominantly in erythroid cells, mature reticulocytes, as well as fetal liver nucleated erythroid cells. At much lower levels, expressed in hepatocytes and bone marrow-derived macrophages (at protein level).

The protein resides in the cytoplasm. The enzyme catalyses L-seryl-[protein] + ATP = O-phospho-L-seryl-[protein] + ADP + H(+). The catalysed reaction is L-threonyl-[protein] + ATP = O-phospho-L-threonyl-[protein] + ADP + H(+). With respect to regulation, in normal conditions, the protein kinase activity is inhibited; inhibition is relieved by various stress conditions. Inhibited by heme: in presence of heme, forms a disulfide-linked inactive homodimer. Heme depletion relieves inhibition and stimulates kinase activity by autophosphorylation. Inhibited by the heme metabolites biliverdin and bilirubin. Induced by oxidative stress generated by arsenite treatment. Binding of nitric oxide (NO) to the heme iron in the N-terminal heme-binding domain activates the kinase activity, while binding of carbon monoxide (CO) suppresses kinase activity. Protein kinase activity is also activated upon binding to DELE1 in response to various stress, triggering the integrated stress response (ISR): activated by full-length DELE1 in response to iron deficiency, while it is activated by the processed form of DELE1 (S-DELE1) in response to mitochondrial stress. Metabolic-stress sensing protein kinase that phosphorylates the alpha subunit of eukaryotic translation initiation factor 2 (EIF2S1/eIF-2-alpha) in response to various stress conditions. Key activator of the integrated stress response (ISR) required for adaptation to various stress, such as heme deficiency, oxidative stress, osmotic shock, mitochondrial dysfunction and heat shock. EIF2S1/eIF-2-alpha phosphorylation in response to stress converts EIF2S1/eIF-2-alpha in a global protein synthesis inhibitor, leading to a global attenuation of cap-dependent translation, while concomitantly initiating the preferential translation of ISR-specific mRNAs, such as the transcriptional activator ATF4, and hence allowing ATF4-mediated reprogramming. Acts as a key sensor of heme-deficiency: in normal conditions, binds hemin via a cysteine thiolate and histidine nitrogenous coordination, leading to inhibit the protein kinase activity. This binding occurs with moderate affinity, allowing it to sense the heme concentration within the cell: heme depletion relieves inhibition and stimulates kinase activity, activating the ISR. Thanks to this unique heme-sensing capacity, plays a crucial role to shut off protein synthesis during acute heme-deficient conditions. In red blood cells (RBCs), controls hemoglobin synthesis ensuring a coordinated regulation of the synthesis of its heme and globin moieties. It thereby plays an essential protective role for RBC survival in anemias of iron deficiency. Iron deficiency also triggers activation by full-length DELE1. Also activates the ISR in response to mitochondrial dysfunction: HRI/EIF2AK1 protein kinase activity is activated upon binding to the processed form of DELE1 (S-DELE1), thereby promoting the ATF4-mediated reprogramming. Also acts as an activator of mitophagy in response to mitochondrial damage: catalyzes phosphorylation of eIF-2-alpha (EIF2S1) following activation by S-DELE1, thereby promoting mitochondrial localization of EIF2S1, triggering PRKN-independent mitophagy. This Mus musculus (Mouse) protein is Eukaryotic translation initiation factor 2-alpha kinase 1.